A 260-amino-acid polypeptide reads, in one-letter code: Triosephosphate isomerase (260 aa).

Position 11-13 (11-13 (NWK)) interacts with substrate. The active-site Electrophile is the histidine 103. Glutamate 175 acts as the Proton acceptor in catalysis. Residues glycine 181, serine 220, and 241 to 242 (GG) each bind substrate.

Belongs to the triosephosphate isomerase family. In terms of assembly, homodimer.

It is found in the cytoplasm. It carries out the reaction D-glyceraldehyde 3-phosphate = dihydroxyacetone phosphate. Its pathway is carbohydrate biosynthesis; gluconeogenesis. The protein operates within carbohydrate degradation; glycolysis; D-glyceraldehyde 3-phosphate from glycerone phosphate: step 1/1. Involved in the gluconeogenesis. Catalyzes stereospecifically the conversion of dihydroxyacetone phosphate (DHAP) to D-glyceraldehyde-3-phosphate (G3P). The polypeptide is Triosephosphate isomerase (Shewanella sp. (strain MR-7)).